The chain runs to 217 residues: Glutathione S-transferase B (217 aa).

A GST N-terminal domain is found at 1-87 (PMTLGYWNIR…YIARKHNLCG (87 aa)). Residues 6–7 (YW), 45–49 (WLNEK), 58–59 (NL), and 71–72 (QS) each bind glutathione. The GST C-terminal domain maps to 89–207 (TEEETIRMDI…KSSRFLPKPL (119 aa)). A substrate-binding site is contributed by Tyr-115.

It belongs to the GST superfamily. Mu family. In terms of assembly, homodimer.

The protein localises to the cytoplasm. It catalyses the reaction RX + glutathione = an S-substituted glutathione + a halide anion + H(+). The catalysed reaction is prostaglandin A2 + glutathione = prostaglandin A2-S-(R)-glutathione. It carries out the reaction prostaglandin J2 + glutathione = prostaglandin J2-S-(R)-glutathione. The enzyme catalyses prostaglandin J2 + glutathione = prostaglandin J2-S-(S)-glutathione. It catalyses the reaction prostaglandin A2 + glutathione = prostaglandin A2-S-(S)-glutathione. The catalysed reaction is 11(S)-hydroxy-14(S),15(S)-epoxy-(5Z,8Z,12E)-eicosatrienoate + glutathione = (11S,15S)-dihydroxy-14(R)-S-glutathionyl-(5Z,8Z,12E)-eicosatrienoate. Functionally, conjugation of reduced glutathione to a wide number of exogenous and endogenous hydrophobic electrophiles. Involved in the formation of glutathione conjugates of both prostaglandin A2 (PGA2) and prostaglandin J2 (PGJ2). Participates in the formation of novel hepoxilin regioisomers. In Cavia porcellus (Guinea pig), this protein is Glutathione S-transferase B (GSTM1).